Consider the following 460-residue polypeptide: MDLSKYPAEPFKIKSVEPVKMISREEREIAMKEAGYNTFNLRSEDVYIDLLTDSGTNAMSDAQWAGMMIGDEAYAGSKNWLFLESTIKELFGFKHVVPTHQGRGAENLLSSIAIKPGQYVAGNMYFTTTRYHQEKNGGIFVDIIRDEAHDASIDIPFKGNIDVNKLEKLIEEKGAENIAYVCLAVTVNLAGGQPVSMANMRAVRELTAKHGIKVFYDATRCVENAYFIKEQEEGYADVSIKDIVHEMFSYSDGATMSGKKDGIVNIGGFLAINDEELFGKAKEIVVVYEGMPSYGGMTGRDMQAIAIGFREAMQYEYIEHRIRQVRYLGDRLKEAGVPIVEPVGGHAVFLDARRFCPHLDQEQFPAQSLAASLYIDSGVRSMERGIVSAGRDVNTGENHKPKLETVRLTIPRRVYTYKHMDVVAESVIHLYKHKEDIRPLKFTYEPAQLRFFTAKFDYAD.

Lys-260 is modified (N6-(pyridoxal phosphate)lysine).

The protein belongs to the beta-eliminating lyase family. In terms of assembly, homotetramer. Pyridoxal 5'-phosphate serves as cofactor.

It carries out the reaction L-tyrosine + H2O = phenol + pyruvate + NH4(+). The protein is Tyrosine phenol-lyase of Clostridium tetani (strain Massachusetts / E88).